Reading from the N-terminus, the 112-residue chain is MTALSNMKCEACQADAPKVTDEELAELIRMIPDWGVQVRDGVMQLERVYKFKNFKLAMAFTNKLADLAEEEFHHPGIFTEWGKVTVTWWSHSIKGLHKNDFIMAAKTDQLLV.

It belongs to the pterin-4-alpha-carbinolamine dehydratase family.

The enzyme catalyses (4aS,6R)-4a-hydroxy-L-erythro-5,6,7,8-tetrahydrobiopterin = (6R)-L-erythro-6,7-dihydrobiopterin + H2O. In Shewanella baltica (strain OS223), this protein is Putative pterin-4-alpha-carbinolamine dehydratase.